Reading from the N-terminus, the 396-residue chain is Acetate kinase (396 aa).

Asn-7 is a Mg(2+) binding site. Lys-14 contributes to the ATP binding site. Arg-88 is a substrate binding site. The Proton donor/acceptor role is filled by Asp-145. Residues 205–209, 279–281, and 327–331 contribute to the ATP site; these read HLGNG, DFR, and GIGEN. Glu-381 lines the Mg(2+) pocket.

The protein belongs to the acetokinase family. As to quaternary structure, homodimer. Mg(2+) serves as cofactor. Mn(2+) is required as a cofactor.

Its subcellular location is the cytoplasm. It catalyses the reaction acetate + ATP = acetyl phosphate + ADP. It functions in the pathway metabolic intermediate biosynthesis; acetyl-CoA biosynthesis; acetyl-CoA from acetate: step 1/2. Functionally, catalyzes the formation of acetyl phosphate from acetate and ATP. Can also catalyze the reverse reaction. This Campylobacter jejuni subsp. jejuni serotype O:23/36 (strain 81-176) protein is Acetate kinase.